A 296-amino-acid chain; its full sequence is Probable endonuclease 4 (296 aa).

Residues H68, H109, E144, D178, H181, H213, D226, H228, and E258 each contribute to the Zn(2+) site.

This sequence belongs to the AP endonuclease 2 family. Zn(2+) is required as a cofactor.

The catalysed reaction is Endonucleolytic cleavage to 5'-phosphooligonucleotide end-products.. Its function is as follows. Endonuclease IV plays a role in DNA repair. It cleaves phosphodiester bonds at apurinic or apyrimidinic (AP) sites, generating a 3'-hydroxyl group and a 5'-terminal sugar phosphate. The chain is Probable endonuclease 4 from Staphylococcus carnosus (strain TM300).